We begin with the raw amino-acid sequence, 159 residues long: RNA pyrophosphohydrolase (159 aa).

Residues 6 to 149 enclose the Nudix hydrolase domain; sequence GFRPNVGIIL…KREVYRRALK (144 aa). A Nudix box motif is present at residues 38-59; sequence GGINPDETPEDALYRELNEEVG.

It belongs to the Nudix hydrolase family. RppH subfamily. The cofactor is a divalent metal cation.

Accelerates the degradation of transcripts by removing pyrophosphate from the 5'-end of triphosphorylated RNA, leading to a more labile monophosphorylated state that can stimulate subsequent ribonuclease cleavage. The chain is RNA pyrophosphohydrolase from Pseudomonas fluorescens (strain SBW25).